Reading from the N-terminus, the 353-residue chain is Probable peptide ABC transporter ATP-binding protein y4tS (353 aa).

Positions 6 to 256 (LKVESLTKHY…PVHPYTEALI (251 aa)) constitute an ABC transporter domain. ATP is bound at residue 49 to 56 (GESGCGKS).

The protein belongs to the ABC transporter superfamily.

The protein resides in the cell inner membrane. In terms of biological role, probably part of a binding-protein-dependent transport system y4tOPQRS for a peptide. Probably responsible for energy coupling to the transport system. This chain is Probable peptide ABC transporter ATP-binding protein y4tS, found in Sinorhizobium fredii (strain NBRC 101917 / NGR234).